The following is a 311-amino-acid chain: Glutaminase (311 aa).

The substrate site is built by Ser66, Asn116, Glu162, Asn169, Tyr193, Tyr245, and Val263.

Belongs to the glutaminase family. In terms of assembly, homotetramer.

The enzyme catalyses L-glutamine + H2O = L-glutamate + NH4(+). The protein is Glutaminase of Rhodopseudomonas palustris (strain BisB5).